The following is a 369-amino-acid chain: 2-aminoethylphosphonate--pyruvate transaminase (369 aa).

Lys-193 bears the N6-(pyridoxal phosphate)lysine mark.

Belongs to the class-V pyridoxal-phosphate-dependent aminotransferase family. PhnW subfamily. Homodimer. The cofactor is pyridoxal 5'-phosphate.

The catalysed reaction is (2-aminoethyl)phosphonate + pyruvate = phosphonoacetaldehyde + L-alanine. Its function is as follows. Involved in phosphonate degradation. In Burkholderia thailandensis (strain ATCC 700388 / DSM 13276 / CCUG 48851 / CIP 106301 / E264), this protein is 2-aminoethylphosphonate--pyruvate transaminase.